A 405-amino-acid chain; its full sequence is L-rhamnonate dehydratase (405 aa).

Residues H33 and R59 each coordinate substrate. Mg(2+) is bound by residues D226, E252, and E280. H329 functions as the Proton acceptor in the catalytic mechanism. E349 is a binding site for substrate.

It belongs to the mandelate racemase/muconate lactonizing enzyme family. RhamD subfamily. As to quaternary structure, homooctamer; tetramer of dimers. Mg(2+) serves as cofactor.

It catalyses the reaction L-rhamnonate = 2-dehydro-3-deoxy-L-rhamnonate + H2O. Functionally, catalyzes the dehydration of L-rhamnonate to 2-keto-3-deoxy-L-rhamnonate (KDR). The protein is L-rhamnonate dehydratase of Shigella boydii serotype 4 (strain Sb227).